Consider the following 252-residue polypeptide: 3-dehydroquinate dehydratase (252 aa).

Residues Glu-46–Arg-48 and Arg-82 contribute to the 3-dehydroquinate site. His-143 (proton donor/acceptor) is an active-site residue. Catalysis depends on Lys-170, which acts as the Schiff-base intermediate with substrate. 3-dehydroquinate is bound by residues Arg-212, Ser-231, and Gln-235.

The protein belongs to the type-I 3-dehydroquinase family. In terms of assembly, homodimer.

The enzyme catalyses 3-dehydroquinate = 3-dehydroshikimate + H2O. The protein operates within metabolic intermediate biosynthesis; chorismate biosynthesis; chorismate from D-erythrose 4-phosphate and phosphoenolpyruvate: step 3/7. Functionally, involved in the third step of the chorismate pathway, which leads to the biosynthesis of aromatic amino acids. Catalyzes the cis-dehydration of 3-dehydroquinate (DHQ) and introduces the first double bond of the aromatic ring to yield 3-dehydroshikimate. The polypeptide is 3-dehydroquinate dehydratase (Listeria monocytogenes serotype 4b (strain F2365)).